The primary structure comprises 313 residues: UPF0761 membrane protein VV0203 (313 aa).

Helical transmembrane passes span 41–61 (YLAY…LSIL), 104–124 (MTAV…SNID), 139–159 (AVFS…LVGA), 185–205 (LLRW…YLLV), 215–235 (AVVG…GFAA), and 249–269 (ALAA…IVLI). Residues 293 to 313 (LPNNDTELEKDTQRDRFDSES) are disordered. Residues 299–313 (ELEKDTQRDRFDSES) show a composition bias toward basic and acidic residues.

The protein belongs to the UPF0761 family.

It localises to the cell inner membrane. This Vibrio vulnificus (strain YJ016) protein is UPF0761 membrane protein VV0203.